The following is a 367-amino-acid chain: Anhydro-N-acetylmuramic acid kinase (367 aa).

Residue 11-18 participates in ATP binding; sequence GTSLDGVD.

It belongs to the anhydro-N-acetylmuramic acid kinase family.

The enzyme catalyses 1,6-anhydro-N-acetyl-beta-muramate + ATP + H2O = N-acetyl-D-muramate 6-phosphate + ADP + H(+). It participates in amino-sugar metabolism; 1,6-anhydro-N-acetylmuramate degradation. The protein operates within cell wall biogenesis; peptidoglycan recycling. In terms of biological role, catalyzes the specific phosphorylation of 1,6-anhydro-N-acetylmuramic acid (anhMurNAc) with the simultaneous cleavage of the 1,6-anhydro ring, generating MurNAc-6-P. Is required for the utilization of anhMurNAc either imported from the medium or derived from its own cell wall murein, and thus plays a role in cell wall recycling. This Rhodopseudomonas palustris (strain HaA2) protein is Anhydro-N-acetylmuramic acid kinase.